We begin with the raw amino-acid sequence, 377 residues long: Erythronate-4-phosphate dehydrogenase (377 aa).

Residues Ser59 and Thr81 each coordinate substrate. Asp162 is a binding site for NAD(+). The active site involves Arg237. An NAD(+)-binding site is contributed by Asp260. Residue Glu265 is part of the active site. His282 (proton donor) is an active-site residue. Gly285 serves as a coordination point for NAD(+). Residue Tyr286 coordinates substrate.

This sequence belongs to the D-isomer specific 2-hydroxyacid dehydrogenase family. PdxB subfamily. In terms of assembly, homodimer.

It localises to the cytoplasm. The catalysed reaction is 4-phospho-D-erythronate + NAD(+) = (R)-3-hydroxy-2-oxo-4-phosphooxybutanoate + NADH + H(+). The protein operates within cofactor biosynthesis; pyridoxine 5'-phosphate biosynthesis; pyridoxine 5'-phosphate from D-erythrose 4-phosphate: step 2/5. Its function is as follows. Catalyzes the oxidation of erythronate-4-phosphate to 3-hydroxy-2-oxo-4-phosphonooxybutanoate. The protein is Erythronate-4-phosphate dehydrogenase of Psychrobacter arcticus (strain DSM 17307 / VKM B-2377 / 273-4).